Reading from the N-terminus, the 257-residue chain is Phosphatidylglycerol--prolipoprotein diacylglyceryl transferase (257 aa).

The next 4 helical transmembrane spans lie at 8-28 (IFGL…ILAY), 48-68 (VFIV…VIFN), 84-104 (EGGL…YLMS), and 109-129 (LNFL…QAIG). Arg-130 lines the a 1,2-diacyl-sn-glycero-3-phospho-(1'-sn-glycerol) pocket. 3 consecutive transmembrane segments (helical) span residues 169 to 189 (PTFL…LLIT), 196 to 216 (GSIF…IEGL), and 225 to 245 (SLRM…ILII).

The protein belongs to the Lgt family.

Its subcellular location is the cell membrane. The catalysed reaction is L-cysteinyl-[prolipoprotein] + a 1,2-diacyl-sn-glycero-3-phospho-(1'-sn-glycerol) = an S-1,2-diacyl-sn-glyceryl-L-cysteinyl-[prolipoprotein] + sn-glycerol 1-phosphate + H(+). It participates in protein modification; lipoprotein biosynthesis (diacylglyceryl transfer). In terms of biological role, catalyzes the transfer of the diacylglyceryl group from phosphatidylglycerol to the sulfhydryl group of the N-terminal cysteine of a prolipoprotein, the first step in the formation of mature lipoproteins. The protein is Phosphatidylglycerol--prolipoprotein diacylglyceryl transferase of Clostridium novyi (strain NT).